The primary structure comprises 247 residues: MNPLIAQGESRTTSPVVVALDFADADGALAFASRLDPAECRLKVGKELFTSSGRHLVESLAARGFQVFLDMKFHDIPNTVAQACKAAAESGVWMVNVHASGGRRMMEAAREALAGYSQRPLLIAVTVLTSMEASDLAEVGIAATPQEHVLRLATLTRDCGLDGVVCSAQEAAMLKLALGRDFKLVTPGIRLADSAGDDQRRVMTPTAALAAGSDYLVIGRPITRAADPLAALRAINQDISVFLGKQS.

Substrate-binding positions include Asp21, Lys43, 70–79 (DMKFHDIPNT), Thr129, Arg190, Gln199, Gly219, and Arg220. Lys72 (proton donor) is an active-site residue.

Belongs to the OMP decarboxylase family. Type 1 subfamily. Homodimer.

It carries out the reaction orotidine 5'-phosphate + H(+) = UMP + CO2. The protein operates within pyrimidine metabolism; UMP biosynthesis via de novo pathway; UMP from orotate: step 2/2. Catalyzes the decarboxylation of orotidine 5'-monophosphate (OMP) to uridine 5'-monophosphate (UMP). The polypeptide is Orotidine 5'-phosphate decarboxylase (Chromobacterium violaceum (strain ATCC 12472 / DSM 30191 / JCM 1249 / CCUG 213 / NBRC 12614 / NCIMB 9131 / NCTC 9757 / MK)).